We begin with the raw amino-acid sequence, 288 residues long: Bis(5'-nucleosyl)-tetraphosphatase, symmetrical (288 aa).

This sequence belongs to the Ap4A hydrolase family.

It catalyses the reaction P(1),P(4)-bis(5'-adenosyl) tetraphosphate + H2O = 2 ADP + 2 H(+). Functionally, hydrolyzes diadenosine 5',5'''-P1,P4-tetraphosphate to yield ADP. The chain is Bis(5'-nucleosyl)-tetraphosphatase, symmetrical from Baumannia cicadellinicola subsp. Homalodisca coagulata.